The chain runs to 328 residues: Bidirectional sugar transporter SWEET16 (328 aa).

Residues 1 to 5 are Extracellular-facing; sequence MADPS. The helical transmembrane segment at 6-26 threads the bilayer; sequence FFVGIVGNVISILVFASPIAT. The MtN3/slv 1 domain maps to 6–92; sequence FFVGIVGNVI…TLYLAYAPRE (87 aa). Residues 27–38 lie on the Cytoplasmic side of the membrane; that stretch reads FRRIVRSKSTEE. The helical transmembrane segment at 39–56 threads the bilayer; it reads FRWLPYVTTLLSTSLWTF. Residues 57 to 63 are Extracellular-facing; it reads YGLHKPG. A helical membrane pass occupies residues 64-84; the sequence is GLLIVTVNGSGAALEAIYVTL. Residues 85–99 lie on the Cytoplasmic side of the membrane; the sequence is YLAYAPRETKAKMVK. The chain crosses the membrane as a helical span at residues 100-120; it reads VVLAVNVGALAAVVAVALVAL. Topologically, residues 121 to 125 are extracellular; the sequence is HGGVR. The chain crosses the membrane as a helical span at residues 126 to 146; the sequence is LFVVGVLCAALTIGMYAAPMA. Residues 127–213 enclose the MtN3/slv 2 domain; that stretch reads FVVGVLCAAL…LYMAYRRTKK (87 aa). Residues 147–161 are Cytoplasmic-facing; the sequence is AMRTVVKTRSVEYMP. Residues 162-182 form a helical membrane-spanning segment; that stretch reads FSLSFFLFLNGGVWSVYSLLV. Residues 183–185 are Extracellular-facing; sequence KDY. The chain crosses the membrane as a helical span at residues 186–206; that stretch reads FIGIPNAIGFALGTAQLALYM. At 207–328 the chain is on the cytoplasmic side; it reads AYRRTKKPAG…ATTAGPGDRH (122 aa). A compositionally biased stretch (basic residues) spans 288-299; it reads HQHHGGHHHHHR. Residues 288–328 are disordered; it reads HQHHGGHHHHHRFDTVPDDDDEAVAAGGTTPATTAGPGDRH. Low complexity predominate over residues 312-328; the sequence is AAGGTTPATTAGPGDRH.

It belongs to the SWEET sugar transporter family. Forms homooligomers and/or heterooligomers.

The protein resides in the cell membrane. Functionally, mediates both low-affinity uptake and efflux of sugar across the plasma membrane. The sequence is that of Bidirectional sugar transporter SWEET16 (SWEET16) from Oryza sativa subsp. japonica (Rice).